The sequence spans 539 residues: Tetracenomycin B2 monooxygenase-dioxygenase (539 aa).

Leu-15, Glu-35, Gln-128, and Leu-152 together coordinate FAD. The active-site Proton acceptor is the Tyr-231. Asp-313 provides a ligand contact to FAD.

It belongs to the PheA/TfdB FAD monooxygenase family. The cofactor is FAD.

It carries out the reaction tetracenomycin B2 + 2 NADPH + 2 O2 + 2 H(+) = 8-demethyltetracenomycin C + 2 NADP(+) + H2O. The catalysed reaction is tetracenomycin A2 + 2 NADPH + 2 O2 + 2 H(+) = tetracenomycin C + 2 NADP(+) + H2O. It functions in the pathway antibiotic biosynthesis. Its function is as follows. Involved in the biosynthesis of elloramycin, an antitumor polyketide. In vivo, probably catalyzes the triple hydroxylation of 8-demethyltetracenomycin A2 (tetracenomycin B2) at positions C-4, C-4a and C-12a to give 8-demethyltetracenomycin C (8-DMTC). In vitro, catalyzes the triple hydroxylation of tetracenomycin A2 (TCM A2) to give tetracenomycin C (TCM C). Uses NADPH as an electron donor and requires molecular O(2). This chain is Tetracenomycin B2 monooxygenase-dioxygenase, found in Streptomyces olivaceus.